The following is a 184-amino-acid chain: Large ribosomal subunit protein uL5c (184 aa).

The protein belongs to the universal ribosomal protein uL5 family. Part of the 50S ribosomal subunit; contacts the 5S rRNA.

The protein resides in the plastid. It localises to the chloroplast. Its function is as follows. Binds 5S rRNA, forms part of the central protuberance of the 50S subunit. The chain is Large ribosomal subunit protein uL5c (rpl5) from Nephroselmis olivacea (Green alga).